A 308-amino-acid chain; its full sequence is Acetyl-coenzyme A carboxylase carboxyl transferase subunit beta (308 aa).

Residues 26–295 (LWIKDPETGE…EQKPLEPEIL (270 aa)) form the CoA carboxyltransferase N-terminal domain.

It belongs to the AccD/PCCB family. In terms of assembly, acetyl-CoA carboxylase is a heterohexamer composed of biotin carboxyl carrier protein (AccB), biotin carboxylase (AccC) and two subunits each of ACCase subunit alpha (AccA) and ACCase subunit beta (AccD).

It localises to the cytoplasm. The enzyme catalyses N(6)-carboxybiotinyl-L-lysyl-[protein] + acetyl-CoA = N(6)-biotinyl-L-lysyl-[protein] + malonyl-CoA. The protein operates within lipid metabolism; malonyl-CoA biosynthesis; malonyl-CoA from acetyl-CoA: step 1/1. In terms of biological role, component of the acetyl coenzyme A carboxylase (ACC) complex. Biotin carboxylase (BC) catalyzes the carboxylation of biotin on its carrier protein (BCCP) and then the CO(2) group is transferred by the transcarboxylase to acetyl-CoA to form malonyl-CoA. The chain is Acetyl-coenzyme A carboxylase carboxyl transferase subunit beta from Mesorhizobium japonicum (strain LMG 29417 / CECT 9101 / MAFF 303099) (Mesorhizobium loti (strain MAFF 303099)).